Consider the following 880-residue polypeptide: Alanine--tRNA ligase (880 aa).

Belongs to the class-II aminoacyl-tRNA synthetase family.

Its subcellular location is the cytoplasm. The catalysed reaction is tRNA(Ala) + L-alanine + ATP = L-alanyl-tRNA(Ala) + AMP + diphosphate. In terms of biological role, catalyzes the attachment of alanine to tRNA(Ala) in a two-step reaction: alanine is first activated by ATP to form Ala-AMP and then transferred to the acceptor end of tRNA(Ala). Also edits incorrectly charged Ser-tRNA(Ala) and Gly-tRNA(Ala) via its editing domain. In Lactiplantibacillus plantarum (strain ATCC BAA-793 / NCIMB 8826 / WCFS1) (Lactobacillus plantarum), this protein is Alanine--tRNA ligase (alaS).